The sequence spans 416 residues: MLSLILFFPSFAFAVTPVTPYFGPLYITFNCCLFGDSRSDCTKVQSPMSLDNPQNFCPNFSLKSSSSMFFSIHYNNHSSLVLFDNFNCRIEKVYYNGVNLSPRNQYSCYDEGVDSYMELKTSFNIKLNQMATILRCIKLIQLKARSSFTTLQDVVCRTNKYLPNNPTFALLSDTVPTWVQFVLPDLSGKTICIKYLVPFCHLNHGCFTAGSSCPPFGVSYVSDSFNYGFNDATPYIGLAESHDNVCDYLFVEAGTHNASIVGNFLFYPTKSYCFNTMNFTVPVQAIQSIWSEGNESDDAIAEACKPPFCIYYSKTTPYTVTNGSNADHRDDEVRMMVRGLLYNSSCISAQGSTPLALYSTAMLYAPIYGSCPQYVKLFDTSGSESVDVISSSYFVATWVLLVVVVILIFVIISFFC.

A signal peptide spans 1 to 14; sequence MLSLILFFPSFAFA. An esterase domain first part region spans residues 4-121; sequence LILFFPSFAF…GVDSYMELKT (118 aa). Over 15–393 the chain is Virion surface; the sequence is VTPVTPYFGP…ESVDVISSSY (379 aa). Catalysis depends on Ser-37, which acts as the Nucleophile. Residues Cys-41 and Cys-57 are joined by a disulfide bond. N-linked (GlcNAc...) asparagine; by host glycans are attached at residues Asn-59 and Asn-76. Intrachain disulfides connect Cys-88-Cys-136, Cys-108-Cys-156, Cys-192-Cys-273, Cys-200-Cys-246, and Cys-206-Cys-213. Residues 122–263 are receptor binding; it reads SFNIKLNQMA…GTHNASIVGN (142 aa). Asn-257, Asn-278, and Asn-294 each carry an N-linked (GlcNAc...) asparagine; by host glycan. The segment at 264–379 is esterase domain second part; it reads FLFYPTKSYC…SCPQYVKLFD (116 aa). A disulfide bridge connects residues Cys-304 and Cys-309. Asn-322 carries N-linked (GlcNAc...) asparagine; by host glycosylation. The active-site Charge relay system is the His-328. Asn-343 carries N-linked (GlcNAc...) asparagine; by host glycosylation. Residues Cys-346 and Cys-371 are joined by a disulfide bond. Residues 394 to 414 form a helical membrane-spanning segment; that stretch reads FVATWVLLVVVVILIFVIISF. The Intravirion segment spans residues 415–416; the sequence is FC.

The protein belongs to the influenza type C/coronaviruses hemagglutinin-esterase family. As to quaternary structure, homodimer. Post-translationally, N-glycosylated.

The protein localises to the virion membrane. The protein resides in the host cell membrane. The enzyme catalyses N-acetyl-9-O-acetylneuraminate + H2O = N-acetylneuraminate + acetate + H(+). The catalysed reaction is N-acetyl-4-O-acetylneuraminate + H2O = N-acetylneuraminate + acetate + H(+). Structural protein that makes short spikes at the surface of the virus. Contains receptor binding and receptor-destroying activities. Mediates de-O-acetylation of N-acetyl-9-O-acetylneuraminic acid, which is probably the receptor determinant recognized by the virus on the surface of erythrocytes and susceptible cells. This receptor-destroying activity is important for virus release as it probably helps preventing self-aggregation and ensures the efficient spread of the progeny virus from cell to cell. May serve as a secondary viral attachment protein for initiating infection, the spike protein being the major one. Seems to be a 'luxury' protein that is not absolutely necessary for virus infection in culture. However, its presence in the virus may alter its pathogenicity. May become a target for both the humoral and the cellular branches of the immune system. The chain is Hemagglutinin-esterase (HE) from Homo sapiens (Human).